The sequence spans 844 residues: Protein translocase subunit SecA (844 aa).

ATP-binding positions include glutamine 87, 105-109 (GEGKT), and aspartate 495. Residues 783–800 (QAPPEELKQEFKHKEEPK) show a composition bias toward basic and acidic residues. Positions 783 to 844 (QAPPEELKQE…GQKYKKCCGA (62 aa)) are disordered. Over residues 802 to 811 (LNYSGAQKET) the composition is skewed to polar residues. Residues 816–826 (PERRGEPKVGR) show a composition bias toward basic and acidic residues. Cysteine 830, cysteine 832, cysteine 841, and cysteine 842 together coordinate Zn(2+).

This sequence belongs to the SecA family. Monomer and homodimer. Part of the essential Sec protein translocation apparatus which comprises SecA, SecYEG and auxiliary proteins SecDF-YajC and YidC. Zn(2+) is required as a cofactor.

Its subcellular location is the cell inner membrane. It localises to the cytoplasm. The enzyme catalyses ATP + H2O + cellular proteinSide 1 = ADP + phosphate + cellular proteinSide 2.. Functionally, part of the Sec protein translocase complex. Interacts with the SecYEG preprotein conducting channel. Has a central role in coupling the hydrolysis of ATP to the transfer of proteins into and across the cell membrane, serving as an ATP-driven molecular motor driving the stepwise translocation of polypeptide chains across the membrane. This is Protein translocase subunit SecA from Nitratidesulfovibrio vulgaris (strain DSM 19637 / Miyazaki F) (Desulfovibrio vulgaris).